The following is a 161-amino-acid chain: 2-C-methyl-D-erythritol 2,4-cyclodiphosphate synthase (161 aa).

Residues D13 and H15 each coordinate a divalent metal cation. 4-CDP-2-C-methyl-D-erythritol 2-phosphate-binding positions include 13–15 (DAH) and 40–41 (HS). An a divalent metal cation-binding site is contributed by H48. 62-64 (DIG) provides a ligand contact to 4-CDP-2-C-methyl-D-erythritol 2-phosphate.

It belongs to the IspF family. Homotrimer. It depends on a divalent metal cation as a cofactor.

The catalysed reaction is 4-CDP-2-C-methyl-D-erythritol 2-phosphate = 2-C-methyl-D-erythritol 2,4-cyclic diphosphate + CMP. It participates in isoprenoid biosynthesis; isopentenyl diphosphate biosynthesis via DXP pathway; isopentenyl diphosphate from 1-deoxy-D-xylulose 5-phosphate: step 4/6. Involved in the biosynthesis of isopentenyl diphosphate (IPP) and dimethylallyl diphosphate (DMAPP), two major building blocks of isoprenoid compounds. Catalyzes the conversion of 4-diphosphocytidyl-2-C-methyl-D-erythritol 2-phosphate (CDP-ME2P) to 2-C-methyl-D-erythritol 2,4-cyclodiphosphate (ME-CPP) with a corresponding release of cytidine 5-monophosphate (CMP). In Deinococcus radiodurans (strain ATCC 13939 / DSM 20539 / JCM 16871 / CCUG 27074 / LMG 4051 / NBRC 15346 / NCIMB 9279 / VKM B-1422 / R1), this protein is 2-C-methyl-D-erythritol 2,4-cyclodiphosphate synthase.